The sequence spans 452 residues: CCA-adding enzyme (452 aa).

2 residues coordinate ATP: S54 and R57. S54 and R57 together coordinate CTP. D66, D68, and D117 together coordinate Mg(2+). H140, K160, and Y169 together coordinate ATP. Positions 140, 160, and 169 each coordinate CTP.

Belongs to the tRNA nucleotidyltransferase/poly(A) polymerase family. Archaeal CCA-adding enzyme subfamily. As to quaternary structure, homodimer. It depends on Mg(2+) as a cofactor.

It carries out the reaction a tRNA precursor + 2 CTP + ATP = a tRNA with a 3' CCA end + 3 diphosphate. It catalyses the reaction a tRNA with a 3' CCA end + 2 CTP + ATP = a tRNA with a 3' CCACCA end + 3 diphosphate. Its function is as follows. Catalyzes the addition and repair of the essential 3'-terminal CCA sequence in tRNAs without using a nucleic acid template. Adds these three nucleotides in the order of C, C, and A to the tRNA nucleotide-73, using CTP and ATP as substrates and producing inorganic pyrophosphate. tRNA 3'-terminal CCA addition is required both for tRNA processing and repair. Also involved in tRNA surveillance by mediating tandem CCA addition to generate a CCACCA at the 3' terminus of unstable tRNAs. While stable tRNAs receive only 3'-terminal CCA, unstable tRNAs are marked with CCACCA and rapidly degraded. This chain is CCA-adding enzyme, found in Halobacterium salinarum (strain ATCC 29341 / DSM 671 / R1).